A 2280-amino-acid chain; its full sequence is Acetyl-CoA carboxylase (2280 aa).

The Biotin carboxylation domain maps to 68–577 (VITSILIANN…TTGWLDRLIA (510 aa)). The ATP-grasp domain occupies 226 to 418 (ETNIVTVDDD…LPAAQLQVAM (193 aa)). 266 to 271 (GGGGKG) contributes to the ATP binding site. Glu375, Glu389, and Asn391 together coordinate Mn(2+). Arg393 is an active-site residue. Residues 704–778 (LEQENDPTQL…DAGDILGILT (75 aa)) enclose the Biotinyl-binding domain. Lys745 carries the N6-biotinyllysine modification. Phosphoserine is present on residues Ser1179 and Ser1181. Positions 1524-1863 (PYPTKEWLQP…KRNNPVPISP (340 aa)) constitute a CoA carboxyltransferase N-terminal domain. The carboxyltransferase stretch occupies residues 1524-2181 (PYPTKEWLQP…EHYALQKITQ (658 aa)). CoA contacts are provided by Arg1772, Lys2074, and Arg2076. Positions 1867-2181 (TWDRDVEFYP…EHYALQKITQ (315 aa)) constitute a CoA carboxyltransferase C-terminal domain.

Interacts with sad1. Biotin is required as a cofactor. Mn(2+) serves as cofactor.

It localises to the cytoplasm. The catalysed reaction is hydrogencarbonate + acetyl-CoA + ATP = malonyl-CoA + ADP + phosphate + H(+). It carries out the reaction N(6)-biotinyl-L-lysyl-[protein] + hydrogencarbonate + ATP = N(6)-carboxybiotinyl-L-lysyl-[protein] + ADP + phosphate + H(+). The protein operates within lipid metabolism; malonyl-CoA biosynthesis; malonyl-CoA from acetyl-CoA: step 1/1. By phosphorylation. Its function is as follows. Carries out three functions: biotin carboxyl carrier protein, biotin carboxylase and carboxyltransferase. The chain is Acetyl-CoA carboxylase (cut6) from Schizosaccharomyces pombe (strain 972 / ATCC 24843) (Fission yeast).